Here is a 963-residue protein sequence, read N- to C-terminus: SH3 domain-binding protein 4 (963 aa).

An SH3 1 domain is found at Gly55–Tyr114. Phosphoserine is present on residues Ser131, Ser246, Ser251, Ser279, and Ser296. The ZU5 domain occupies Thr317–Val454. Ser637 is subject to Phosphoserine. The 71-residue stretch at Ser654–Arg724 folds into the SH3 2 domain.

As to quaternary structure, homodimer or homooligomer. Interacts with DNM2, EPS15, clathrin, the adapter protein complex 2/AP-2 and TFRC. Interacts with the Rag GTPases RRAGA, RRAGB, RRAGC and RRAGD; the interaction is most probably direct, preferentially occurs with their inactive GDP-bound form and is negatively regulated by amino acids. In terms of assembly, (Microbial infection) Interacts with molluscum contagiosum virus protein MC159L; this interaction is important for the suppression of autophagy. Phosphorylated upon EGF stimulation. Phosphorylation prevents interaction with DNM2. Expressed in all tissues tested with higher expression in pancreas. Expressed by retinal pigment epithelial cells (at protein level).

Its subcellular location is the membrane. The protein localises to the clathrin-coated pit. It localises to the cytoplasmic vesicle. The protein resides in the clathrin-coated vesicle. It is found in the nucleus. In terms of biological role, may function in transferrin receptor internalization at the plasma membrane through a cargo-specific control of clathrin-mediated endocytosis. Alternatively, may act as a negative regulator of the amino acid-induced TOR signaling by inhibiting the formation of active Rag GTPase complexes. Preferentially binds inactive Rag GTPase complexes and prevents their interaction with the mTORC1 complex inhibiting its relocalization to lysosomes and its activation. Thereby, may indirectly regulate cell growth, proliferation and autophagy. The polypeptide is SH3 domain-binding protein 4 (SH3BP4) (Homo sapiens (Human)).